Reading from the N-terminus, the 243-residue chain is MALLHSANPADQIIVALDGMAPDQALAFSVQVEGLRWVKVGLELFVQAGPEVVAQLREQDLRVFLDLKFHDIPATMAGACRRAAALGAELITVHACAGSEALNAAQSAAMEGAQSSGQPSPTLLAVTVLTSWEEQRLQRELAISQGIAPRVSALAQLSATAGIGGCVCSPWEAAALRAQHPEPFALITPGIRLKGAAVGDQARVMGPAEAMTAGATQLVIGRPITRANDPSAAFNACCRELRT.

Residues aspartate 18, lysine 39, 66-75 (DLKFHDIPAT), threonine 130, arginine 192, glutamine 201, glycine 221, and arginine 222 contribute to the substrate site. The Proton donor role is filled by lysine 68.

The protein belongs to the OMP decarboxylase family. Type 1 subfamily. In terms of assembly, homodimer.

It catalyses the reaction orotidine 5'-phosphate + H(+) = UMP + CO2. Its pathway is pyrimidine metabolism; UMP biosynthesis via de novo pathway; UMP from orotate: step 2/2. In terms of biological role, catalyzes the decarboxylation of orotidine 5'-monophosphate (OMP) to uridine 5'-monophosphate (UMP). The protein is Orotidine 5'-phosphate decarboxylase of Synechococcus sp. (strain CC9902).